The primary structure comprises 393 residues: Phosphopentomutase (393 aa).

D11, D282, H287, D323, H324, and H335 together coordinate Mn(2+).

It belongs to the phosphopentomutase family. Mn(2+) serves as cofactor.

It localises to the cytoplasm. The catalysed reaction is 2-deoxy-alpha-D-ribose 1-phosphate = 2-deoxy-D-ribose 5-phosphate. It catalyses the reaction alpha-D-ribose 1-phosphate = D-ribose 5-phosphate. It functions in the pathway carbohydrate degradation; 2-deoxy-D-ribose 1-phosphate degradation; D-glyceraldehyde 3-phosphate and acetaldehyde from 2-deoxy-alpha-D-ribose 1-phosphate: step 1/2. Functionally, isomerase that catalyzes the conversion of deoxy-ribose 1-phosphate (dRib-1-P) and ribose 1-phosphate (Rib-1-P) to deoxy-ribose 5-phosphate (dRib-5-P) and ribose 5-phosphate (Rib-5-P), respectively. The protein is Phosphopentomutase of Caldanaerobacter subterraneus subsp. tengcongensis (strain DSM 15242 / JCM 11007 / NBRC 100824 / MB4) (Thermoanaerobacter tengcongensis).